Reading from the N-terminus, the 185-residue chain is UPF0301 protein MS0260 (185 aa).

Belongs to the UPF0301 (AlgH) family.

In Mannheimia succiniciproducens (strain KCTC 0769BP / MBEL55E), this protein is UPF0301 protein MS0260.